A 361-amino-acid chain; its full sequence is MMDSPKKLGYHMPAEYEPHHGTLMIWPTRPGSWPFQGKDAKRAFTQIIETIAEGERVYLLVEQAYLSEAQSYLGDKVVYLDIPTNDAWARDTGPTILVNDKGKKLAVDWAFNAWGGTYDGLYQDYEEDDQVASRFAEALERPVYDAKPFVLEGGAIHSDGQGTILVTESCLLSPGRNPNLTKEEIENTLLESLGAEKVIWLPYGIYQDETNEHVDNVAAFVGPAEVVLAWTDDENDPQYAMSKADLELLEQETDAKGCHFTIHKLPIPAVRQVVTEEDLPGYIYEEGEEERYAGERLAASYVNFYIANKAVLVPQFEDVNDQVALDILSKCFPDRKVVGIPARDILLGGGNIHCITQQIPE.

Cysteine 354 serves as the catalytic Amidino-cysteine intermediate.

The protein belongs to the agmatine deiminase family.

It carries out the reaction agmatine + H2O = N-carbamoylputrescine + NH4(+). This is Putative agmatine deiminase from Streptococcus pneumoniae (strain Hungary19A-6).